The following is a 1255-amino-acid chain: Structural polyprotein (1255 aa).

The tract at residues 1–33 (MFPFQPMYPMQPMPYRNPFAAPRRPWFPRTDPF) is necessary for nucleocapsid assembly and virus assembly. A host transcription inhibition region spans residues 33-68 (FLAMQVQELTRSMANLTFKQRREAPPEGPPAKKPKR). The Supraphysiological nuclear export signal motif lies at 41-48 (LTRSMANL). Residues 44 to 119 (SMANLTFKQR…KKPGKRQRMV (76 aa)) are disordered. Residue Asn-47 is glycosylated (N-linked (GlcNAc...) asparagine; by host). The Nuclear localization signal signature appears at 64 to 68 (KKPKR). The segment covering 80 to 92 (GKKKKNQGKKKAK) has biased composition (basic residues). A binding to the viral RNA region spans residues 91–127 (AKTGPPNPKAQNGNKKKTNKKPGKRQRMVMKLESDKT). Residues Thr-93 and Thr-108 each carry the phosphothreonine modification. Residues 104-118 (NKKKTNKKPGKRQRM) are compositionally biased toward basic residues. Residues 112-126 (PGKRQRMVMKLESDK) are ribosome-binding. Ser-124 bears the Phosphoserine mark. The Peptidase S3 domain occupies 126-275 (KTFPIMLEGK…KYTPENCEQW (150 aa)). Position 127 is a phosphothreonine (Thr-127). His-152 acts as the Charge relay system in catalysis. Residues 168–173 (KKASKY) form an interaction with spike glycoprotein E2 region. Catalysis depends on charge relay system residues Asp-174 and Ser-226. The segment at 260–264 (EKGVT) is interaction with spike glycoprotein E2. Residues 276-287 (SLVTTMCLLANV) form a functions as an uncleaved signal peptide for the precursor of protein E3/E2 region. Residues 276–701 (SLVTTMCLLA…HYYHRYPMST (426 aa)) are Extracellular-facing. Intrachain disulfides connect Cys-282/Cys-291, Cys-353/Cys-457, Cys-356/Cys-361, Cys-424/Cys-438, Cys-485/Cys-600, Cys-534/Cys-560, and Cys-536/Cys-554. A glycan (N-linked (GlcNAc...) asparagine; by host) is linked at Asn-286. A glycan (N-linked (GlcNAc...) asparagine; by host) is linked at Asn-652. The helical transmembrane segment at 702–722 (ILGLSICAAIVTVSIAASTWL) threads the bilayer. The Cytoplasmic portion of the chain corresponds to 723–757 (LCKSRVSCLTPYRLTPNARMPLCLAVLCCARTARA). Residues 725 to 729 (KSRVS) form an interaction with the capsid protein region. 3 S-palmitoyl cysteine; by host lipidation sites follow: Cys-730, Cys-750, and Cys-751. The segment at 730–750 (CLTPYRLTPNARMPLCLAVLC) is transient transmembrane before p62-6K protein processing. Residues Cys-730 and Cys-751 are joined by a disulfide bond. At 758-772 (ETTWESLDHLWNNNQ) the chain is on the extracellular side. Residues 773–793 (QMFWIQLLIPLAALIVVTRLL) form a helical membrane-spanning segment. Residue Arg-794 is a topological domain, cytoplasmic. The chain crosses the membrane as a helical span at residues 795–815 (CVCCVVPFLVVAGAAGAGAYE). At 816–1225 (HATTMPSQAG…SKTAWTWLTS (410 aa)) the chain is on the extracellular side. Cystine bridges form between Cys-862-Cys-927, Cys-875-Cys-907, Cys-876-Cys-909, and Cys-881-Cys-891. Positions 897–914 (VYPFMWGGAYCFCDTENT) are E1 fusion peptide loop. N-linked (GlcNAc...) asparagine; by host glycans are attached at residues Asn-947 and Asn-1083. Cystine bridges form between Cys-1072–Cys-1084, Cys-1114–Cys-1189, Cys-1119–Cys-1193, and Cys-1141–Cys-1183. Residues 1226 to 1246 (LLGGSAVIIIIGLVLATIVAM) traverse the membrane as a helical segment. Residues 1247–1255 (YVLTNQKHN) lie on the Cytoplasmic side of the membrane.

Homodimer. Homomultimer. Interacts with host karyopherin KPNA4; this interaction allows the nuclear import of the viral capsid protein. Interacts with spike glycoprotein E2. Interacts with host IRAK1; the interaction leads to inhibition of IRAK1-dependent signaling. Part of a tetrameric complex composed of host CRM1, host importin alpha/beta dimer and the viral capsid; this complex blocks the receptor-mediated transport through the nuclear pore. Interacts with host phosphatase PPP1CA; this interaction dephosphorylates the capsid protein, which increases its ability to bind to the viral genome. In terms of assembly, the precursor of protein E3/E2 and E1 form a heterodimer shortly after synthesis. As to quaternary structure, interacts with spike glycoprotein E2. The precursor of protein E3/E2 and E1 form a heterodimer shortly after synthesis. Processing of the precursor of protein E3/E2 into E2 and E3 results in a heterodimer of the spike glycoproteins E2 and E1. Spike at virion surface are constituted of three E2-E1 heterodimers. After target cell attachment and endocytosis, E1 change conformation to form homotrimers. Interacts with 6K protein. Interacts with host LDLRAD3; this interaction mediates viral entry to the host cell. Interacts with spike glycoprotein E1. Processing of the precursor of protein E3/E2 into E2 and E3 results in a heterodimer of the spike glycoproteins E2 and E1. Spike at virion surface are constituted of a trimer of E2-E1 heterodimers. Interacts with 6K protein. Interacts with host LDLRAD3; this interaction mediates viral entry to the host cell. In terms of assembly, oligomer. Interacts with spike glycoprotein E1. Interacts with spike glycoprotein E2. Structural polyprotein: Specific enzymatic cleavages in vivo yield mature proteins. Capsid protein is auto-cleaved during polyprotein translation, unmasking a signal peptide at the N-terminus of the precursor of E3/E2. The remaining polyprotein is then targeted to the host endoplasmic reticulum, where host signal peptidase cleaves it into pE2, 6K and E1 proteins. pE2 is further processed to mature E3 and E2 by host furin in trans-Golgi vesicle. Post-translationally, phosphorylated on serine and threonine residues. In terms of processing, palmitoylated via thioester bonds. These palmitoylations may induce disruption of the C-terminus transmembrane. This would result in the reorientation of E2 C-terminus from lumenal to cytoplasmic side. N-glycosylated. Post-translationally, palmitoylated via thioester bonds.

It is found in the virion. It localises to the host cytoplasm. The protein localises to the host cell membrane. The protein resides in the host nucleus. Its subcellular location is the virion membrane. It is found in the host Golgi apparatus. It localises to the host trans-Golgi network. The protein localises to the host endoplasmic reticulum. It carries out the reaction Autocatalytic release of the core protein from the N-terminus of the togavirus structural polyprotein by hydrolysis of a -Trp-|-Ser- bond.. Functionally, forms an icosahedral capsid with a T=4 symmetry composed of 240 copies of the capsid protein surrounded by a lipid membrane through which penetrate 80 spikes composed of trimers of E1-E2 heterodimers. The capsid protein binds to the viral RNA genome at a site adjacent to a ribosome binding site for viral genome translation following genome release. Possesses a protease activity that results in its autocatalytic cleavage from the nascent structural protein. Following its self-cleavage, the capsid protein transiently associates with ribosomes, and within several minutes the protein binds to viral RNA and rapidly assembles into icosahedric core particles. The resulting nucleocapsid eventually associates with the cytoplasmic domain of the spike glycoprotein E2 at the cell membrane, leading to budding and formation of mature virions. In case of infection, new virions attach to target cells and after clathrin-mediated endocytosis their membrane fuses with the host endosomal membrane. This leads to the release of the nucleocapsid into the cytoplasm, followed by an uncoating event necessary for the genomic RNA to become accessible. The uncoating might be triggered by the interaction of capsid proteins with ribosomes. Binding of ribosomes would release the genomic RNA since the same region is genomic RNA-binding and ribosome-binding. Specifically inhibits interleukin-1 receptor-associated kinase 1/IRAK1-dependent signaling during viral entry, representing a means by which the alphaviruses may evade innate immune detection and activation prior to viral gene expression. Inhibits host transcription. Forms a tetrameric complex with XPO1/CRM1 and the nuclear import receptor importin. This complex blocks the central channel of host nuclear pores thereby inhibiting the receptor-mediated nuclear transport and thus the host mRNA and rRNA transcription. The inhibition of transcription is linked to a cytopathic effect on the host cell. Its function is as follows. Provides the signal sequence for the translocation of the precursor of protein E3/E2 to the host endoplasmic reticulum. Furin-cleaved E3 remains associated with spike glycoprotein E1 and mediates pH protection of the latter during the transport via the secretory pathway. After virion release from the host cell, the assembly protein E3 is gradually released in the extracellular space. Plays a role in viral attachment to target host cell, by binding to the cell receptor LDLRAD3. Synthesized as a p62 precursor which is processed by furin at the cell membrane just before virion budding, giving rise to E2-E1 heterodimer. The p62-E1 heterodimer is stable, whereas E2-E1 is unstable and dissociate at low pH. p62 is processed at the last step, presumably to avoid E1 fusion activation before its final export to cell surface. E2 C-terminus contains a transitory transmembrane that would be disrupted by palmitoylation, resulting in reorientation of the C-terminal tail from lumenal to cytoplasmic side. This step is critical since E2 C-terminus is involved in budding by interacting with capsid proteins. This release of E2 C-terminus in cytoplasm occurs lately in protein export, and precludes premature assembly of particles at the endoplasmic reticulum membrane. In terms of biological role, acts as a viroporin that participates in virus glycoprotein processing and transport to the plasma membrane, cell permeabilization and budding of viral particles. Disrupts the calcium homeostasis of the cell, probably at the endoplasmic reticulum level. This leads to cytoplasmic calcium elevation. Because of its lipophilic properties, the 6K protein is postulated to influence the selection of lipids that interact with the transmembrane domains of the glycoproteins, which, in turn, affects the deformability of the bilayer required for the extreme curvature that occurs as budding proceeds. Present in low amount in virions, about 3% compared to viral glycoproteins. Functionally, class II viral fusion protein. Fusion activity is inactive as long as E1 is bound to E2 in mature virion. After virus attachment to cell receptor LDLRAD3 and endocytosis, acidification of the endosome induce dissociation of E1/E2 heterodimer and concomitant trimerization of the E1 subunits. This E1 trimer is fusion active, and promotes release of viral nucleocapsid in cytoplasm after endosome and viral membrane fusion. Efficient fusion requires the presence of cholesterol and sphingolipid in the target membrane. The protein is Structural polyprotein of Venezuelan equine encephalitis virus (strain 3880) (VEEV).